Reading from the N-terminus, the 322-residue chain is Biotin synthase (322 aa).

The Radical SAM core domain maps to 39–266 (NQVQISSLLN…KSVVRLSAGR (228 aa)). [4Fe-4S] cluster contacts are provided by Cys54, Cys58, and Cys61. [2Fe-2S] cluster is bound by residues Cys98, Cys129, Cys189, and Arg261.

This sequence belongs to the radical SAM superfamily. Biotin synthase family. In terms of assembly, homodimer. [4Fe-4S] cluster is required as a cofactor. It depends on [2Fe-2S] cluster as a cofactor.

It carries out the reaction (4R,5S)-dethiobiotin + (sulfur carrier)-SH + 2 reduced [2Fe-2S]-[ferredoxin] + 2 S-adenosyl-L-methionine = (sulfur carrier)-H + biotin + 2 5'-deoxyadenosine + 2 L-methionine + 2 oxidized [2Fe-2S]-[ferredoxin]. The protein operates within cofactor biosynthesis; biotin biosynthesis; biotin from 7,8-diaminononanoate: step 2/2. Functionally, catalyzes the conversion of dethiobiotin (DTB) to biotin by the insertion of a sulfur atom into dethiobiotin via a radical-based mechanism. The sequence is that of Biotin synthase from Vesicomyosocius okutanii subsp. Calyptogena okutanii (strain HA).